Reading from the N-terminus, the 118-residue chain is Small ribosomal subunit protein uS13 (118 aa).

The interval 94 to 118 is disordered; sequence SLPVRGQRTKTNARTRKGPRRPIKR.

Belongs to the universal ribosomal protein uS13 family. In terms of assembly, part of the 30S ribosomal subunit. Forms a loose heterodimer with protein S19. Forms two bridges to the 50S subunit in the 70S ribosome.

Located at the top of the head of the 30S subunit, it contacts several helices of the 16S rRNA. In the 70S ribosome it contacts the 23S rRNA (bridge B1a) and protein L5 of the 50S subunit (bridge B1b), connecting the 2 subunits; these bridges are implicated in subunit movement. Contacts the tRNAs in the A and P-sites. This is Small ribosomal subunit protein uS13 from Dichelobacter nodosus (strain VCS1703A).